A 291-amino-acid chain; its full sequence is Small ribosomal subunit protein uS2 (291 aa).

Residues 241 to 270 are disordered; the sequence is KREPRQINRPVMSSENQAEQQTSVANENVQ. Residues 251-270 are compositionally biased toward polar residues; the sequence is VMSSENQAEQQTSVANENVQ.

The protein belongs to the universal ribosomal protein uS2 family.

This Mycoplasma capricolum subsp. capricolum (strain California kid / ATCC 27343 / NCTC 10154) protein is Small ribosomal subunit protein uS2.